The sequence spans 239 residues: Phosphoribosylaminoimidazole-succinocarboxamide synthase (239 aa).

It belongs to the SAICAR synthetase family.

The enzyme catalyses 5-amino-1-(5-phospho-D-ribosyl)imidazole-4-carboxylate + L-aspartate + ATP = (2S)-2-[5-amino-1-(5-phospho-beta-D-ribosyl)imidazole-4-carboxamido]succinate + ADP + phosphate + 2 H(+). Its pathway is purine metabolism; IMP biosynthesis via de novo pathway; 5-amino-1-(5-phospho-D-ribosyl)imidazole-4-carboxamide from 5-amino-1-(5-phospho-D-ribosyl)imidazole-4-carboxylate: step 1/2. This chain is Phosphoribosylaminoimidazole-succinocarboxamide synthase, found in Bacillus cereus (strain AH187).